We begin with the raw amino-acid sequence, 66 residues long: APLEPVYPGDNATPEQMAQYAAELRRYINMLTRPRYGKRDRGETLDILEWGSPHAAAPRELSPMDV.

A Tyrosine amide modification is found at Y36. A propeptide spanning residues 60-66 is cleaved from the precursor; that stretch reads ELSPMDV.

This sequence belongs to the NPY family.

The protein localises to the secreted. Functionally, hormone secreted by pancreatic cells that acts as a regulator of pancreatic and gastrointestinal functions probably by signaling through the G protein-coupled receptor NPY4R2. The protein is Pancreatic polypeptide prohormone (PPY) of Felis catus (Cat).